Consider the following 427-residue polypeptide: Cholecystokinin receptor type A (427 aa).

At 1–41 (MDAVASLLGNASGIPPPCELGLDNETLFCLDQPPPSKEWQP) the chain is on the extracellular side. Asn10 and Asn24 each carry an N-linked (GlcNAc...) asparagine glycan. Residues Cys18 and Cys29 are joined by a disulfide bond. A helical membrane pass occupies residues 42 to 67 (AVQILLYSLIFLLSVLGNTLVITVLI). Over 68-77 (RNKRMRTVTN) the chain is Cytoplasmic. Residues 78-104 (IFLLSLAISDLMLCLFCMPFNLIPNLL) traverse the membrane as a helical segment. Over 105–115 (KDFIFGSALCK) the chain is Extracellular. Residues Cys114 and Cys196 are joined by a disulfide bond. A helical transmembrane segment spans residues 116–137 (TTTYLMGTSVSVSTLNLVAISL). The Cytoplasmic portion of the chain corresponds to 138–157 (ERYGAICKPLQSRVWQTKSH). Residues 158–178 (ALKVIAATWCLSFAIMTPYPI) form a helical membrane-spanning segment. Topologically, residues 179–210 (YSNLVPFTKTNNQTANMCRFLLPSDVMQQAWH) are extracellular. An N-linked (GlcNAc...) asparagine glycan is attached at Asn190. Residues 211–234 (TFLLLILFLIPGIVMMVAYGMISL) traverse the membrane as a helical segment. The Cytoplasmic segment spans residues 235–312 (ELYQGIKFDA…TLMAKKRVIR (78 aa)). A helical transmembrane segment spans residues 313 to 333 (MLMVIVVLFFLCWMPIFSANA). Topologically, residues 334-348 (WRAYDTVSAERRLSG) are extracellular. Residues 349 to 372 (TPISFILLLSYTSSCVNPIIYCFM) traverse the membrane as a helical segment. The Cytoplasmic portion of the chain corresponds to 373 to 427 (NRRFRLGFMATFPCCPNPGPPGPRAEAGEEEEGRTTRASLSRYSYSHMSASAPPS). Cys386 carries the S-palmitoyl cysteine lipid modification. The segment at 391-427 (GPPGPRAEAGEEEEGRTTRASLSRYSYSHMSASAPPS) is disordered. The span at 411 to 421 (SLSRYSYSHMS) shows a compositional bias: polar residues.

Belongs to the G-protein coupled receptor 1 family.

Its subcellular location is the cell membrane. Its function is as follows. Receptor for cholecystokinin. Mediates pancreatic growth and enzyme secretion, smooth muscle contraction of the gall bladder and stomach. Has a 1000-fold higher affinity for CCK rather than for gastrin. It modulates feeding and dopamine-induced behavior in the central and peripheral nervous system. This receptor mediates its action by association with G proteins that activate a phosphatidylinositol-calcium second messenger system. In Oryctolagus cuniculus (Rabbit), this protein is Cholecystokinin receptor type A (CCKAR).